Here is a 35-residue protein sequence, read N- to C-terminus: U5-ctenitoxin-Co1a (35 aa).

Cystine bridges form between Cys4-Cys18, Cys11-Cys24, Cys17-Cys32, and Cys26-Cys30.

In terms of tissue distribution, expressed by the venom gland.

It localises to the secreted. In terms of biological role, blocks voltage-gated sodium channels (Nav). The sequence is that of U5-ctenitoxin-Co1a from Ctenus ornatus (Brazilian spider).